Reading from the N-terminus, the 92-residue chain is Small ribosomal subunit protein uS19c (92 aa).

Belongs to the universal ribosomal protein uS19 family.

It is found in the plastid. The protein localises to the chloroplast. Functionally, protein S19 forms a complex with S13 that binds strongly to the 16S ribosomal RNA. This Rhodomonas salina (Cryptomonas salina) protein is Small ribosomal subunit protein uS19c.